The chain runs to 398 residues: Lysophospholipid transporter LplT (398 aa).

Transmembrane regions (helical) follow at residues M16–A36, I53–A73, A91–V111, L139–A159, I163–Y183, S195–W213, L227–L247, A253–A273, M286–F306, A310–L330, I344–L364, and V372–L392.

The protein belongs to the major facilitator superfamily. LplT (TC 2.A.1.42) family.

Its subcellular location is the cell inner membrane. In terms of biological role, catalyzes the facilitated diffusion of 2-acyl-glycero-3-phosphoethanolamine (2-acyl-GPE) into the cell. This Serratia proteamaculans (strain 568) protein is Lysophospholipid transporter LplT.